Consider the following 189-residue polypeptide: Chitin synthase 1 (189 aa).

This sequence belongs to the chitin synthase family. Class I subfamily.

It is found in the cell membrane. The enzyme catalyses [(1-&gt;4)-N-acetyl-beta-D-glucosaminyl](n) + UDP-N-acetyl-alpha-D-glucosamine = [(1-&gt;4)-N-acetyl-beta-D-glucosaminyl](n+1) + UDP + H(+). In terms of biological role, polymerizes chitin, a structural polymer of the cell wall and septum, by transferring the sugar moiety of UDP-GlcNAc to the non-reducing end of the growing chitin polymer. The polypeptide is Chitin synthase 1 (CHS1) (Rhinocladiella atrovirens).